A 130-amino-acid polypeptide reads, in one-letter code: Fluoride-specific ion channel FluC (130 aa).

Transmembrane regions (helical) follow at residues 10–30 (FAVA…SLWF), 41–61 (GTLI…TVAM), 72–89 (LLFG…STYE), and 105–125 (LVYW…GILL). Na(+)-binding residues include Gly80 and Thr83.

It belongs to the fluoride channel Fluc/FEX (TC 1.A.43) family.

It localises to the cell inner membrane. It carries out the reaction fluoride(in) = fluoride(out). Na(+) is not transported, but it plays an essential structural role and its presence is essential for fluoride channel function. Functionally, fluoride-specific ion channel. Important for reducing fluoride concentration in the cell, thus reducing its toxicity. This chain is Fluoride-specific ion channel FluC, found in Synechococcus sp. (strain JA-2-3B'a(2-13)) (Cyanobacteria bacterium Yellowstone B-Prime).